Here is a 178-residue protein sequence, read N- to C-terminus: Ribulose bisphosphate carboxylase small subunit, chloroplastic 2 (178 aa).

A chloroplast-targeting transit peptide spans 1 to 54 (MASISSTVATVSRAAPAQANMVAPFTGLKSNVAFPATKKANDFSTLPSNGGRVQ).

This sequence belongs to the RuBisCO small chain family. As to quaternary structure, heterohexadecamer of 8 large and 8 small subunits.

The protein localises to the plastid. It is found in the chloroplast. In terms of biological role, ruBisCO catalyzes two reactions: the carboxylation of D-ribulose 1,5-bisphosphate, the primary event in carbon dioxide fixation, as well as the oxidative fragmentation of the pentose substrate. Both reactions occur simultaneously and in competition at the same active site. Although the small subunit is not catalytic it is essential for maximal activity. This is Ribulose bisphosphate carboxylase small subunit, chloroplastic 2 from Flaveria pringlei.